The following is a 387-amino-acid chain: Methylthioribose-1-phosphate isomerase (387 aa).

Residue Asp-257 is the Proton donor of the active site.

It belongs to the eIF-2B alpha/beta/delta subunits family. MtnA subfamily.

The protein localises to the cytoplasm. The protein resides in the nucleus. It catalyses the reaction 5-(methylsulfanyl)-alpha-D-ribose 1-phosphate = 5-(methylsulfanyl)-D-ribulose 1-phosphate. Its pathway is amino-acid biosynthesis; L-methionine biosynthesis via salvage pathway; L-methionine from S-methyl-5-thio-alpha-D-ribose 1-phosphate: step 1/6. Catalyzes the interconversion of methylthioribose-1-phosphate (MTR-1-P) into methylthioribulose-1-phosphate (MTRu-1-P). This Aspergillus fumigatus (strain CBS 144.89 / FGSC A1163 / CEA10) (Neosartorya fumigata) protein is Methylthioribose-1-phosphate isomerase (mri1).